The primary structure comprises 545 residues: Cytochrome P450 10 (545 aa).

Residue cysteine 493 coordinates heme.

This sequence belongs to the cytochrome P450 family. It depends on heme as a cofactor. Abundantly expressed in the female gonadotropic hormone producing dorsal bodies.

May be involved in the synthesis of the female gonadotropic hormone produced by the dorsal bodies. The protein is Cytochrome P450 10 (CYP10) of Lymnaea stagnalis (Great pond snail).